The chain runs to 195 residues: Imidazoleglycerol-phosphate dehydratase (195 aa).

It belongs to the imidazoleglycerol-phosphate dehydratase family.

It localises to the cytoplasm. It carries out the reaction D-erythro-1-(imidazol-4-yl)glycerol 3-phosphate = 3-(imidazol-4-yl)-2-oxopropyl phosphate + H2O. It functions in the pathway amino-acid biosynthesis; L-histidine biosynthesis; L-histidine from 5-phospho-alpha-D-ribose 1-diphosphate: step 6/9. This is Imidazoleglycerol-phosphate dehydratase from Citrifermentans bemidjiense (strain ATCC BAA-1014 / DSM 16622 / JCM 12645 / Bem) (Geobacter bemidjiensis).